The primary structure comprises 456 residues: Gamma-glutamyl phosphate reductase (456 aa).

Ser-2 is modified (N-acetylserine).

The protein belongs to the gamma-glutamyl phosphate reductase family.

It catalyses the reaction L-glutamate 5-semialdehyde + phosphate + NADP(+) = L-glutamyl 5-phosphate + NADPH + H(+). Its pathway is amino-acid biosynthesis; L-proline biosynthesis; L-glutamate 5-semialdehyde from L-glutamate: step 2/2. In terms of biological role, catalyzes the NADPH dependent reduction of L-gamma-glutamyl 5-phosphate into L-glutamate 5-semialdehyde and phosphate. The product spontaneously undergoes cyclization to form 1-pyrroline-5-carboxylate. The polypeptide is Gamma-glutamyl phosphate reductase (PRO2) (Saccharomyces cerevisiae (strain ATCC 204508 / S288c) (Baker's yeast)).